Reading from the N-terminus, the 662-residue chain is Probable protein phosphatase CG10417 (662 aa).

Residues 23 to 564 (AVGASSMQGW…DNMTAVIVQF (542 aa)) enclose the PPM-type phosphatase domain. Mn(2+) is bound by residues D57 and G58. Disordered regions lie at residues 219–275 (DGVA…FKHT) and 288–374 (GSND…DEDQ). Composition is skewed to polar residues over residues 238–252 (DSNT…STKN), 261–275 (NDQN…FKHT), and 288–319 (GSND…INSS). 2 positions are modified to phosphoserine: S289 and S306. A compositionally biased stretch (acidic residues) spans 320 to 334 (QDDEFTDDDADYEEN). Residues 337-347 (VKSPDTSSAES) show a composition bias toward polar residues. Positions 349-374 (DCTENDDDGDEDGNEDSDEEETDEDQ) are enriched in acidic residues. D506 and D555 together coordinate Mn(2+). Residues 591 to 609 (VSHSLNDQSASKRCASQNA) show a composition bias toward polar residues. Residues 591–662 (VSHSLNDQSA…KEVTIIVSSS (72 aa)) form a disordered region. Phosphoserine occurs at positions 592, 594, and 599. A compositionally biased stretch (basic and acidic residues) spans 616–637 (LEKNNSKRLKTDLEQENIKDRT). At T637 the chain carries Phosphothreonine. A phosphoserine mark is found at S639 and S641.

The protein belongs to the PP2C family. Mg(2+) is required as a cofactor. The cofactor is Mn(2+).

It carries out the reaction O-phospho-L-seryl-[protein] + H2O = L-seryl-[protein] + phosphate. The enzyme catalyses O-phospho-L-threonyl-[protein] + H2O = L-threonyl-[protein] + phosphate. This is Probable protein phosphatase CG10417 from Drosophila melanogaster (Fruit fly).